The following is a 1368-amino-acid chain: Cingulin (1368 aa).

An interaction with TJP3/ZO3 and myosin region spans residues 9–378 (MADQHIPVGQ…KQQRTVQSEF (370 aa)). The tract at residues 9 to 435 (MADQHIPVGQ…EKLPSLQVQP (427 aa)) is head. The ZIM signature appears at 41 to 55 (QDSYGVAVRVQGIDG). Disordered regions lie at residues 71-264 (FGVQ…TKPL), 278-312 (GQVR…DTAD), 1053-1080 (SRKE…NSSR), 1163-1183 (NRSR…RSRG), and 1308-1368 (QQEI…TSSC). Residues 83–97 (NASNTSPPNYQNYSS) show a composition bias toward polar residues. Positions 101 to 294 (GPSRSISSES…ARRSQALKDE (194 aa)) are interaction with F-actin. Composition is skewed to low complexity over residues 116–132 (PYGS…YSSA) and 200–211 (SQSSRDSAWSRS). The tract at residues 150-295 (SSLPRPLQAS…RRSQALKDER (146 aa)) is interaction with TJP2/ZO2. Residues 228–256 (SATSQQSTSVSNKTKKNGLSTSSPSNQSN) show a composition bias toward polar residues. Basic and acidic residues predominate over residues 290-312 (ALKDERKRSQSLDGRKNYHDTAD). Positions 377-1368 (EFQLKSTPDL…TESNLQTSSC (992 aa)) are interaction with myosin. The stretch at 436–1330 (GEDTISLGSQ…VMEKESKRKP (895 aa)) forms a coiled coil. A compositionally biased stretch (basic and acidic residues) spans 1320–1338 (KVMEKESKRKPIRPAHDDD). Residues 1331-1368 (IRPAHDDDLSSDGEFGGPYDPSSITSLLTESNLQTSSC) form a tail region. The segment covering 1352-1368 (SSITSLLTESNLQTSSC) has biased composition (polar residues).

The protein belongs to the cingulin family. In terms of assembly, parallel homodimer. Interacts with TJP1/ZO1 and TJP2/ZO2 in vivo, and TJP3/ZO3, myosin and OCLN in vitro, possibly directly. Acts as an F-actin bundling protein in vitro. Localized on the cytoplasmic face of tight junctions of polarized epithelia and some endothelia.

The protein localises to the cell junction. It is found in the tight junction. Functionally, probably plays a role in the formation and regulation of the tight junction (TJ) paracellular permeability barrier, possibly by linking ZO proteins to the actomyosin cytoskeleton. This chain is Cingulin, found in Xenopus laevis (African clawed frog).